A 176-amino-acid polypeptide reads, in one-letter code: MPIITDFKAIATGLFVTWKHIFRRSVTVEYPEVKRTPAPRYRARIVLTRDPEGGERCVACYLCSAACPVDCISMEATEDGNGRRYARWFRINFSRCIFCGLCAEACPTLAIQMTPDYEICERDIMELVYEKEDLLIDGCGKDPAYNFYRHAGIGVTQPRGAGEREEEPVDARGLMP.

4Fe-4S ferredoxin-type domains lie at 45–77 (IVLTRDPEGGERCVACYLCSAACPVDCISMEAT) and 87–116 (RWFRINFSRCIFCGLCAEACPTLAIQMTPD). [4Fe-4S] cluster contacts are provided by Cys-57, Cys-60, Cys-63, Cys-67, Cys-96, Cys-99, Cys-102, and Cys-106.

Belongs to the complex I 23 kDa subunit family. As to quaternary structure, NDH-1 is composed of 14 different subunits. Subunits NuoA, H, J, K, L, M, N constitute the membrane sector of the complex. [4Fe-4S] cluster serves as cofactor.

It is found in the cell inner membrane. The catalysed reaction is a quinone + NADH + 5 H(+)(in) = a quinol + NAD(+) + 4 H(+)(out). Functionally, NDH-1 shuttles electrons from NADH, via FMN and iron-sulfur (Fe-S) centers, to quinones in the respiratory chain. The immediate electron acceptor for the enzyme in this species is believed to be ubiquinone. Couples the redox reaction to proton translocation (for every two electrons transferred, four hydrogen ions are translocated across the cytoplasmic membrane), and thus conserves the redox energy in a proton gradient. This is NADH-quinone oxidoreductase subunit I 1 from Geobacter metallireducens (strain ATCC 53774 / DSM 7210 / GS-15).